The chain runs to 65 residues: Large ribosomal subunit protein bL35 (65 aa).

The protein belongs to the bacterial ribosomal protein bL35 family.

The polypeptide is Large ribosomal subunit protein bL35 (Enterobacter sp. (strain 638)).